The chain runs to 509 residues: Zinc finger CCCH-type with G patch domain-containing protein (509 aa).

Positions 41–61 are disordered; that stretch reads TRGSEPEATSDTKTPETSDNI. Residues 47 to 58 show a composition bias toward polar residues; it reads EATSDTKTPETS. The C3H1-type zinc finger occupies 155 to 178; that stretch reads PCNYFLEGECRFDEVRCRYSHGAL. A disordered region spans residues 254-278; that stretch reads DDDLTSESEESNETDGSDAGNDSDM. In terms of domain architecture, G-patch spans 310-356; that stretch reads TRGIGSKLMANMGYIHGTGLGSDGRGIVTPVSAQILPQGRSLDACME. Residues 410–433 are disordered; it reads GSQQTENANKKTKPNNLQQHSNKT. The segment covering 423 to 433 has biased composition (polar residues); it reads PNNLQQHSNKT.

Its subcellular location is the nucleus. In terms of biological role, transcription repressor. In Drosophila mojavensis (Fruit fly), this protein is Zinc finger CCCH-type with G patch domain-containing protein.